Reading from the N-terminus, the 256-residue chain is Pimeloyl-[acyl-carrier protein] methyl ester esterase (256 aa).

In terms of domain architecture, AB hydrolase-1 spans 15-242 (HLVLLHGWGL…AAHAPFISHP (228 aa)). Substrate is bound by residues W22, 82–83 (SL), and 143–147 (FLALQ). S82 (nucleophile) is an active-site residue. Catalysis depends on residues D207 and H235. H235 serves as a coordination point for substrate.

Belongs to the AB hydrolase superfamily. Carboxylesterase BioH family. Monomer.

It localises to the cytoplasm. It carries out the reaction 6-carboxyhexanoyl-[ACP] methyl ester + H2O = 6-carboxyhexanoyl-[ACP] + methanol + H(+). The protein operates within cofactor biosynthesis; biotin biosynthesis. Functionally, the physiological role of BioH is to remove the methyl group introduced by BioC when the pimeloyl moiety is complete. It allows to synthesize pimeloyl-ACP via the fatty acid synthetic pathway through the hydrolysis of the ester bonds of pimeloyl-ACP esters. This Salmonella dublin (strain CT_02021853) protein is Pimeloyl-[acyl-carrier protein] methyl ester esterase.